Here is a 568-residue protein sequence, read N- to C-terminus: Proline--tRNA ligase (568 aa).

This sequence belongs to the class-II aminoacyl-tRNA synthetase family. ProS type 1 subfamily. In terms of assembly, homodimer.

The protein localises to the cytoplasm. It catalyses the reaction tRNA(Pro) + L-proline + ATP = L-prolyl-tRNA(Pro) + AMP + diphosphate. Functionally, catalyzes the attachment of proline to tRNA(Pro) in a two-step reaction: proline is first activated by ATP to form Pro-AMP and then transferred to the acceptor end of tRNA(Pro). As ProRS can inadvertently accommodate and process non-cognate amino acids such as alanine and cysteine, to avoid such errors it has two additional distinct editing activities against alanine. One activity is designated as 'pretransfer' editing and involves the tRNA(Pro)-independent hydrolysis of activated Ala-AMP. The other activity is designated 'posttransfer' editing and involves deacylation of mischarged Ala-tRNA(Pro). The misacylated Cys-tRNA(Pro) is not edited by ProRS. The protein is Proline--tRNA ligase of Nitrosomonas eutropha (strain DSM 101675 / C91 / Nm57).